A 432-amino-acid chain; its full sequence is Histidinol dehydrogenase (432 aa).

Residues Y130, Q191, and N214 each coordinate NAD(+). Substrate-binding residues include S237, Q259, and H262. Q259 and H262 together coordinate Zn(2+). Residues E327 and H328 each act as proton acceptor in the active site. H328, D361, E415, and H420 together coordinate substrate. A Zn(2+)-binding site is contributed by D361. H420 provides a ligand contact to Zn(2+).

The protein belongs to the histidinol dehydrogenase family. Requires Zn(2+) as cofactor.

The catalysed reaction is L-histidinol + 2 NAD(+) + H2O = L-histidine + 2 NADH + 3 H(+). The protein operates within amino-acid biosynthesis; L-histidine biosynthesis; L-histidine from 5-phospho-alpha-D-ribose 1-diphosphate: step 9/9. Functionally, catalyzes the sequential NAD-dependent oxidations of L-histidinol to L-histidinaldehyde and then to L-histidine. The chain is Histidinol dehydrogenase from Agrobacterium fabrum (strain C58 / ATCC 33970) (Agrobacterium tumefaciens (strain C58)).